The following is a 705-amino-acid chain: Ovotransferrin (705 aa).

An N-terminal signal peptide occupies residues 1 to 19 (MKLILCTVLSLGIAAVCFA). 2 consecutive Transferrin-like domains span residues 26-352 (IRWC…SMRK) and 364-689 (IQWC…SLKT). 2 cysteine pairs are disulfide-bonded: Cys-29-Cys-64 and Cys-39-Cys-55. 2 residues coordinate Fe(3+): Asp-79 and Tyr-111. Cystine bridges form between Cys-134-Cys-216, Cys-179-Cys-193, Cys-190-Cys-201, and Cys-247-Cys-261. Thr-136, Arg-140, Ala-142, and Gly-143 together coordinate hydrogencarbonate. Tyr-210 serves as a coordination point for Fe(3+). His-269 is a binding site for Fe(3+). Residues 352 to 360 (KDQLTPSPR) form a connecting region region. 2 disulfide bridges follow: Cys-367–Cys-399 and Cys-377–Cys-390. Fe(3+)-binding residues include Asp-414 and Tyr-450. 7 disulfides stabilise this stretch: Cys-424–Cys-699, Cys-440–Cys-662, Cys-473–Cys-549, Cys-497–Cys-690, Cys-507–Cys-521, Cys-518–Cys-532, and Cys-589–Cys-603. Residues Thr-475, Arg-479, Ala-481, and Gly-482 each contribute to the hydrogencarbonate site. Asn-492 carries N-linked (GlcNAc...) asparagine glycosylation. Tyr-543 serves as a coordination point for Fe(3+). His-611 is a Fe(3+) binding site.

This sequence belongs to the transferrin family. In terms of assembly, monomer. In terms of processing, different forms of hen transferrin are distinguished by their carbohydrate composition. Ovotransferrin and embryo serum transferrin but not adult serum transferrin, have bisecting N-acetylglucosamine. Transferrin secreted by embryo hepatocytes in primary culture is marked by the presence of (alpha1-6) fucosylation of the core N-acetylglucosamine. Serum transferrins also differ in the number of attached neuraminic acid residues. In both embryo forms, sialylation occurs on the Man (alpha 1-3)-linked antennae. Expressed in the magnum of the oviduct (at protein level).

It is found in the secreted. Transferrins are iron binding transport proteins which can bind two Fe(3+) ions in association with the binding of an anion, usually bicarbonate. Responsible for the transport of iron from sites of absorption and heme degradation to those of storage and utilization. There are two forms of hen transferrin, ovotransferrin, found in the ovoducts and, serum transferrin, secreted by the liver. Serum transferrin may also have a role in stimulating cell proliferation and is regulated by iron levels. Ovotransferrin has a bacteriostatic function and, is not controlled by iron levels. The polypeptide is Ovotransferrin (Gallus gallus (Chicken)).